The primary structure comprises 447 residues: N-succinylarginine dihydrolase (447 aa).

Substrate-binding positions include 19-28 (AGLSFGNEAS), asparagine 110, and 137-138 (HR). Glutamate 174 is a catalytic residue. Position 212 (arginine 212) interacts with substrate. Residue histidine 248 is part of the active site. Positions 250 and 359 each coordinate substrate. Cysteine 365 (nucleophile) is an active-site residue.

Belongs to the succinylarginine dihydrolase family. In terms of assembly, homodimer.

It catalyses the reaction N(2)-succinyl-L-arginine + 2 H2O + 2 H(+) = N(2)-succinyl-L-ornithine + 2 NH4(+) + CO2. It functions in the pathway amino-acid degradation; L-arginine degradation via AST pathway; L-glutamate and succinate from L-arginine: step 2/5. Catalyzes the hydrolysis of N(2)-succinylarginine into N(2)-succinylornithine, ammonia and CO(2). The protein is N-succinylarginine dihydrolase of Salmonella dublin (strain CT_02021853).